A 260-amino-acid polypeptide reads, in one-letter code: Proteasome subunit alpha (260 aa).

Residues 241–260 (VEEEEVKEKEEDYSELDSHY) are disordered.

It belongs to the peptidase T1A family. As to quaternary structure, the 20S proteasome core is composed of 14 alpha and 14 beta subunits that assemble into four stacked heptameric rings, resulting in a barrel-shaped structure. The two inner rings, each composed of seven catalytic beta subunits, are sandwiched by two outer rings, each composed of seven alpha subunits. The catalytic chamber with the active sites is on the inside of the barrel. Has a gated structure, the ends of the cylinder being occluded by the N-termini of the alpha-subunits. Is capped at one or both ends by the proteasome regulatory ATPase, PAN.

It localises to the cytoplasm. Its activity is regulated as follows. The formation of the proteasomal ATPase PAN-20S proteasome complex, via the docking of the C-termini of PAN into the intersubunit pockets in the alpha-rings, triggers opening of the gate for substrate entry. Interconversion between the open-gate and close-gate conformations leads to a dynamic regulation of the 20S proteasome proteolysis activity. Functionally, component of the proteasome core, a large protease complex with broad specificity involved in protein degradation. The protein is Proteasome subunit alpha of Pyrococcus horikoshii (strain ATCC 700860 / DSM 12428 / JCM 9974 / NBRC 100139 / OT-3).